A 106-amino-acid polypeptide reads, in one-letter code: MADLISYDDAIDAAYDIFLEMAPDNLEPVDVILFTAQFDDRGAAELVDISDDWAGHVGFDVDKESYAEVRIGLVNEENDVLDDVFARMLISRDPDQKFCHILWKRD.

It belongs to the putative dsDNA mimic protein family.

Its function is as follows. May act as a double-stranded DNA (dsDNA) mimic. Probably regulates the activity of a dsDNA-binding protein. The polypeptide is Putative double-stranded DNA mimic protein VV1228 (Vibrio vulnificus (strain YJ016)).